Here is a 316-residue protein sequence, read N- to C-terminus: 4-hydroxy-3-methylbut-2-enyl diphosphate reductase (316 aa).

Residue Cys-18 participates in [4Fe-4S] cluster binding. (2E)-4-hydroxy-3-methylbut-2-enyl diphosphate-binding residues include His-47 and His-80. The dimethylallyl diphosphate site is built by His-47 and His-80. Isopentenyl diphosphate contacts are provided by His-47 and His-80. Cys-102 lines the [4Fe-4S] cluster pocket. His-130 is a (2E)-4-hydroxy-3-methylbut-2-enyl diphosphate binding site. His-130 serves as a coordination point for dimethylallyl diphosphate. His-130 is a binding site for isopentenyl diphosphate. Glu-132 functions as the Proton donor in the catalytic mechanism. Thr-171 is a binding site for (2E)-4-hydroxy-3-methylbut-2-enyl diphosphate. A [4Fe-4S] cluster-binding site is contributed by Cys-201. The (2E)-4-hydroxy-3-methylbut-2-enyl diphosphate site is built by Ser-229, Ser-230, Asn-231, and Ser-274. Positions 229, 230, 231, and 274 each coordinate dimethylallyl diphosphate. Ser-229, Ser-230, Asn-231, and Ser-274 together coordinate isopentenyl diphosphate.

This sequence belongs to the IspH family. Requires [4Fe-4S] cluster as cofactor.

The catalysed reaction is isopentenyl diphosphate + 2 oxidized [2Fe-2S]-[ferredoxin] + H2O = (2E)-4-hydroxy-3-methylbut-2-enyl diphosphate + 2 reduced [2Fe-2S]-[ferredoxin] + 2 H(+). It carries out the reaction dimethylallyl diphosphate + 2 oxidized [2Fe-2S]-[ferredoxin] + H2O = (2E)-4-hydroxy-3-methylbut-2-enyl diphosphate + 2 reduced [2Fe-2S]-[ferredoxin] + 2 H(+). It participates in isoprenoid biosynthesis; dimethylallyl diphosphate biosynthesis; dimethylallyl diphosphate from (2E)-4-hydroxy-3-methylbutenyl diphosphate: step 1/1. It functions in the pathway isoprenoid biosynthesis; isopentenyl diphosphate biosynthesis via DXP pathway; isopentenyl diphosphate from 1-deoxy-D-xylulose 5-phosphate: step 6/6. Functionally, catalyzes the conversion of 1-hydroxy-2-methyl-2-(E)-butenyl 4-diphosphate (HMBPP) into a mixture of isopentenyl diphosphate (IPP) and dimethylallyl diphosphate (DMAPP). Acts in the terminal step of the DOXP/MEP pathway for isoprenoid precursor biosynthesis. This is 4-hydroxy-3-methylbut-2-enyl diphosphate reductase from Ruegeria sp. (strain TM1040) (Silicibacter sp.).